The chain runs to 456 residues: Vitamin K-dependent protein C (456 aa).

Residues M1–A20 form the signal peptide. Positions A21–R42 are excised as a propeptide. The region spanning L47–D88 is the Gla domain. 4-carboxyglutamate occurs at positions 48, 49, 56, 58, 61, 62, 67, 68, and 71. C59 and C64 are joined by a disulfide. 4 disulfide bridges follow: C92–C111, C101–C106, C105–C120, and C122–C131. EGF-like domains lie at P97–Q132 and S136–Q176. At D113 the chain carries (3R)-3-hydroxyaspartate. A glycan (N-linked (GlcNAc...) asparagine) is linked at N139. 5 disulfide bridges follow: C140/C151, C147/C160, C162/C175, C183/C318, and C237/C253. N-linked (GlcNAc...) asparagine glycosylation occurs at N202. The region spanning L211–R445 is the Peptidase S1 domain. H252 acts as the Charge relay system in catalysis. N289 carries N-linked (GlcNAc...) asparagine glycosylation. Residue D298 is the Charge relay system of the active site. N350 carries N-linked (GlcNAc...) asparagine glycosylation. 2 disulfide bridges follow: C368–C382 and C393–C421. The active-site Charge relay system is S397.

It belongs to the peptidase S1 family. In terms of assembly, synthesized as a single chain precursor, which is cleaved into a light chain and a heavy chain held together by a disulfide bond. The enzyme is then activated by thrombin, which cleaves a tetradecapeptide from the amino end of the heavy chain; this reaction, which occurs at the surface of endothelial cells, is strongly promoted by thrombomodulin. Post-translationally, the vitamin K-dependent, enzymatic carboxylation of some Glu residues allows the modified protein to bind calcium. In terms of processing, the iron and 2-oxoglutarate dependent 3-hydroxylation of aspartate and asparagine is (R) stereospecific within EGF domains. Plasma; synthesized in the liver.

Its subcellular location is the secreted. The protein resides in the golgi apparatus. The protein localises to the endoplasmic reticulum. It catalyses the reaction Degradation of blood coagulation factors Va and VIIIa.. Protein C is a vitamin K-dependent serine protease that regulates blood coagulation by inactivating factors Va and VIIIa in the presence of calcium ions and phospholipids. Exerts a protective effect on the endothelial cell barrier function. The polypeptide is Vitamin K-dependent protein C (PROC) (Canis lupus familiaris (Dog)).